The sequence spans 309 residues: Manganese-dependent inorganic pyrophosphatase (309 aa).

Positions 9, 13, 15, 75, 97, and 149 each coordinate Mn(2+).

Homodimer. Mn(2+) is required as a cofactor.

It localises to the cytoplasm. The enzyme catalyses diphosphate + H2O = 2 phosphate + H(+). The polypeptide is Manganese-dependent inorganic pyrophosphatase (ppaC) (Bacillus subtilis (strain 168)).